A 759-amino-acid chain; its full sequence is DNA topoisomerase 3 (759 aa).

Residues 3–147 (RALFVAEKND…RLDIFRARFS (145 aa)) enclose the Toprim domain. The Topo IA-type catalytic domain maps to 165–590 (DEKTVAAVDC…EQIGKYRAIF (426 aa)). Tyrosine 334 serves as the catalytic O-(5'-phospho-DNA)-tyrosine intermediate. The interval 609-715 (DKNNQAGGGP…KEQEEEEEVF (107 aa)) is disordered. The segment covering 614-639 (AGGGPGGPGGGGGPPRGPGGGGGGGP) has biased composition (gly residues). Residues 640–649 (TGPPAPPKPP) are compositionally biased toward pro residues. Zn(2+)-binding residues include cysteine 716, cysteine 718, cysteine 743, and cysteine 753. Residues 716–759 (CQCPEPMRAVTKVVQKEGPNKGKKFYTCSLPYTSSEKCNFFKWA) form a GRF-type zinc finger.

It belongs to the type IA topoisomerase family. As to quaternary structure, component of the BTR double Holliday Junction dissolution complex composed of at least him-6, top-3, rmh-1 and rmif-2, which is involved in double strand break repair in the germline. May interact with rmh-1.

It localises to the nucleus. It carries out the reaction ATP-independent breakage of single-stranded DNA, followed by passage and rejoining.. Component of the BTR double Holliday Junction dissolution complex, which is involved in homologous recombination during meiotic double strand break in the germline. Releases the supercoiling and torsional tension of DNA introduced during the DNA replication and transcription by transiently cleaving and rejoining one strand of the DNA duplex. Introduces a single-strand break via transesterification at a target site in duplex DNA. The scissile phosphodiester is attacked by the catalytic tyrosine of the enzyme, resulting in the formation of a DNA-(5'-phosphotyrosyl)-enzyme intermediate and the expulsion of a 3'-OH DNA strand. The free DNA strand than undergoes passage around the unbroken strand thus removing DNA supercoils. Finally, in the religation step, the DNA 3'-OH attacks the covalent intermediate to expel the active-site tyrosine and restore the DNA phosphodiester backbone. This Caenorhabditis elegans protein is DNA topoisomerase 3.